The primary structure comprises 349 residues: MPISVLVVDDSALIRSLLKEIIQADPELRLVGCAPDAFVARDLIKQHAPDVISLDVEMPRMDGLTFLDKLMKARPTPVLMISSLTERGSEATLRALELGAVDFIAKPRLGIAEGMQAYAEEIRAKLKTVARARLRRRAADAPAPPESAAPLLSTEKIIALGASTGGTEALKEVLLGLPAHSPGVVITQHMPPGFTRSFAERLDRLTRLSVSEARDGDRILPGHALVAPGDHHMEVQRSGANYVVRLNRQAQVNGHRPAVDVMFESLARCAGRNLLAGLLTGMGKDGARGLLAIRQAGGYTLAQDEATCVVYGMPREAVELGAAEDVLPLERIAAALLQQAARRGSGNRL.

One can recognise a Response regulatory domain in the interval 4-121 (SVLVVDDSAL…AEGMQAYAEE (118 aa)). Asp-55 carries the 4-aspartylphosphate modification. The CheB-type methylesterase domain maps to 151-343 (LLSTEKIIAL…AALLQQAARR (193 aa)). Catalysis depends on residues Ser-163, His-189, and Asp-285.

The protein belongs to the CheB family. In terms of assembly, interacts with the C-terminal pentapeptide GWEEF of McpB. Phosphorylated by CheA. Phosphorylation of the N-terminal regulatory domain activates the methylesterase activity.

Its subcellular location is the cytoplasm. The catalysed reaction is [protein]-L-glutamate 5-O-methyl ester + H2O = L-glutamyl-[protein] + methanol + H(+). It carries out the reaction L-glutaminyl-[protein] + H2O = L-glutamyl-[protein] + NH4(+). Involved in chemotaxis. Part of a chemotaxis signal transduction system that modulates chemotaxis in response to various stimuli. Catalyzes the demethylation of specific methylglutamate residues introduced into the chemoreceptors (methyl-accepting chemotaxis proteins or MCP) by CheR. Also mediates the irreversible deamidation of specific glutamine residues to glutamic acid. Acts on the methyl-accepting chemotaxis protein McpB. May be involved in a specific chemotactic response, which takes place during infection and is required for P.aeruginosa pathogenicity. The polypeptide is Protein-glutamate methylesterase/protein-glutamine glutaminase 2 (Pseudomonas aeruginosa (strain ATCC 15692 / DSM 22644 / CIP 104116 / JCM 14847 / LMG 12228 / 1C / PRS 101 / PAO1)).